The following is a 92-amino-acid chain: Small ribosomal subunit protein uS19 (92 aa).

The protein belongs to the universal ribosomal protein uS19 family.

Functionally, protein S19 forms a complex with S13 that binds strongly to the 16S ribosomal RNA. This chain is Small ribosomal subunit protein uS19, found in Trichlorobacter lovleyi (strain ATCC BAA-1151 / DSM 17278 / SZ) (Geobacter lovleyi).